We begin with the raw amino-acid sequence, 405 residues long: Acetate kinase (405 aa).

Residue asparagine 7 participates in Mg(2+) binding. Lysine 14 serves as a coordination point for ATP. Arginine 98 contributes to the substrate binding site. Catalysis depends on aspartate 155, which acts as the Proton donor/acceptor. Residues 214-218, 289-291, and 337-341 contribute to the ATP site; these read HLGNG, DLR, and GVGEN. Glutamate 390 provides a ligand contact to Mg(2+).

It belongs to the acetokinase family. As to quaternary structure, homodimer. It depends on Mg(2+) as a cofactor. Mn(2+) is required as a cofactor.

It localises to the cytoplasm. It catalyses the reaction acetate + ATP = acetyl phosphate + ADP. Its pathway is metabolic intermediate biosynthesis; acetyl-CoA biosynthesis; acetyl-CoA from acetate: step 1/2. Functionally, catalyzes the formation of acetyl phosphate from acetate and ATP. Can also catalyze the reverse reaction. This is Acetate kinase from Gloeothece citriformis (strain PCC 7424) (Cyanothece sp. (strain PCC 7424)).